A 473-amino-acid chain; its full sequence is Photosystem II CP43 reaction center protein (473 aa).

Residues 1–14 (MKTLYSLRRFYHVE) constitute a propeptide that is removed on maturation. At Thr15 the chain carries N-acetylthreonine. At Thr15 the chain carries Phosphothreonine. 5 helical membrane-spanning segments follow: residues 69–93 (LFEVAHFVPEKPMYEQGLILLPHLA), 134–155 (LLGPETLEESFPFFGYVWKDRN), 178–200 (KALYFGGVYDTWAPGGGDVRKIT), 255–275 (KPFAWARRAFVWSGEAYLSYS), and 291–312 (WFNNTAYPSEFYGPTGPEASQA). Glu367 serves as a coordination point for [CaMn4O5] cluster. A helical membrane pass occupies residues 447–471 (RARAAAAGFEKGIDRDFEPVLSMTP).

This sequence belongs to the PsbB/PsbC family. PsbC subfamily. PSII is composed of 1 copy each of membrane proteins PsbA, PsbB, PsbC, PsbD, PsbE, PsbF, PsbH, PsbI, PsbJ, PsbK, PsbL, PsbM, PsbT, PsbX, PsbY, PsbZ, Psb30/Ycf12, at least 3 peripheral proteins of the oxygen-evolving complex and a large number of cofactors. It forms dimeric complexes. Binds multiple chlorophylls and provides some of the ligands for the Ca-4Mn-5O cluster of the oxygen-evolving complex. It may also provide a ligand for a Cl- that is required for oxygen evolution. PSII binds additional chlorophylls, carotenoids and specific lipids. serves as cofactor.

The protein localises to the plastid. It is found in the chloroplast thylakoid membrane. Its function is as follows. One of the components of the core complex of photosystem II (PSII). It binds chlorophyll and helps catalyze the primary light-induced photochemical processes of PSII. PSII is a light-driven water:plastoquinone oxidoreductase, using light energy to abstract electrons from H(2)O, generating O(2) and a proton gradient subsequently used for ATP formation. The sequence is that of Photosystem II CP43 reaction center protein from Chloranthus spicatus (Chulantree).